The chain runs to 30 residues: Snake venom serine protease (30 aa).

In terms of domain architecture, Peptidase S1 spans 1–30 (VIGGDECNINEHRFLVALYDPDGFLSGGIL).

It belongs to the peptidase S1 family. Snake venom subfamily. In terms of assembly, monomer. In terms of processing, N-Glycosylated. In terms of tissue distribution, expressed by the venom gland.

It is found in the secreted. Inhibited by diisopropylfluorophosphate (DFP). Functionally, snake venom serine protease that catalyzes the hydrolysis of arginine esters, kallikrein substrates Pro-Phe-Arg-MCA and Z-Phe-Arg-MCA. Cleaves kininogen analogs to release bradykinin. Induces contraction of the isolated rat uterus directly at high concentrations, but provokes more forceful contractions when injected in presence of bovine plasma. Shows capillary permeability-increasing activity and hypotensive activity on the anesthetized rat. This Crotalus viridis viridis (Prairie rattlesnake) protein is Snake venom serine protease.